Here is a 27-residue protein sequence, read N- to C-terminus: SCLSSGALCGIDSNCCNGCNVPRNQCY.

Disulfide bonds link Cys2-Cys16, Cys9-Cys19, and Cys15-Cys26. Position 27 is a tyrosine amide (Tyr27).

In terms of tissue distribution, expressed by the venom duct.

Its subcellular location is the secreted. In terms of biological role, 1 uM of this toxin does not show any effect on voltage-gated sodium and potassium channels. Does not show antibacterial activity on both Gram-negative and Gram-positive bacteria. This is Conotoxin Lo6/7b from Conasprella longurionis (Cone snail).